The primary structure comprises 338 residues: Ketol-acid reductoisomerase (NADP(+)) (338 aa).

In terms of domain architecture, KARI N-terminal Rossmann spans 1 to 181 (MKVYYDSDAD…GGGRAGIIET (181 aa)). NADP(+) contacts are provided by residues 24 to 27 (YGSQ), Arg-47, Ser-50, Ser-52, and 82 to 85 (DEHQ). His-107 is an active-site residue. Residue Gly-133 coordinates NADP(+). The KARI C-terminal knotted domain occupies 182–327 (SFKEETETDL…AKLRAMMPWI (146 aa)). Residues Asp-190, Glu-194, Glu-226, and Glu-230 each contribute to the Mg(2+) site. Ser-251 provides a ligand contact to substrate.

It belongs to the ketol-acid reductoisomerase family. The cofactor is Mg(2+).

The catalysed reaction is (2R)-2,3-dihydroxy-3-methylbutanoate + NADP(+) = (2S)-2-acetolactate + NADPH + H(+). It catalyses the reaction (2R,3R)-2,3-dihydroxy-3-methylpentanoate + NADP(+) = (S)-2-ethyl-2-hydroxy-3-oxobutanoate + NADPH + H(+). Its pathway is amino-acid biosynthesis; L-isoleucine biosynthesis; L-isoleucine from 2-oxobutanoate: step 2/4. The protein operates within amino-acid biosynthesis; L-valine biosynthesis; L-valine from pyruvate: step 2/4. In terms of biological role, involved in the biosynthesis of branched-chain amino acids (BCAA). Catalyzes an alkyl-migration followed by a ketol-acid reduction of (S)-2-acetolactate (S2AL) to yield (R)-2,3-dihydroxy-isovalerate. In the isomerase reaction, S2AL is rearranged via a Mg-dependent methyl migration to produce 3-hydroxy-3-methyl-2-ketobutyrate (HMKB). In the reductase reaction, this 2-ketoacid undergoes a metal-dependent reduction by NADPH to yield (R)-2,3-dihydroxy-isovalerate. This Magnetococcus marinus (strain ATCC BAA-1437 / JCM 17883 / MC-1) protein is Ketol-acid reductoisomerase (NADP(+)).